The sequence spans 166 residues: Crossover junction endodeoxyribonuclease RuvC (166 aa).

Catalysis depends on residues aspartate 9, glutamate 70, and aspartate 144. Residues aspartate 9, glutamate 70, and aspartate 144 each contribute to the Mg(2+) site.

This sequence belongs to the RuvC family. In terms of assembly, homodimer which binds Holliday junction (HJ) DNA. The HJ becomes 2-fold symmetrical on binding to RuvC with unstacked arms; it has a different conformation from HJ DNA in complex with RuvA. In the full resolvosome a probable DNA-RuvA(4)-RuvB(12)-RuvC(2) complex forms which resolves the HJ. Requires Mg(2+) as cofactor.

Its subcellular location is the cytoplasm. The catalysed reaction is Endonucleolytic cleavage at a junction such as a reciprocal single-stranded crossover between two homologous DNA duplexes (Holliday junction).. Functionally, the RuvA-RuvB-RuvC complex processes Holliday junction (HJ) DNA during genetic recombination and DNA repair. Endonuclease that resolves HJ intermediates. Cleaves cruciform DNA by making single-stranded nicks across the HJ at symmetrical positions within the homologous arms, yielding a 5'-phosphate and a 3'-hydroxyl group; requires a central core of homology in the junction. The consensus cleavage sequence is 5'-(A/T)TT(C/G)-3'. Cleavage occurs on the 3'-side of the TT dinucleotide at the point of strand exchange. HJ branch migration catalyzed by RuvA-RuvB allows RuvC to scan DNA until it finds its consensus sequence, where it cleaves and resolves the cruciform DNA. The polypeptide is Crossover junction endodeoxyribonuclease RuvC (Neorickettsia sennetsu (strain ATCC VR-367 / Miyayama) (Ehrlichia sennetsu)).